Here is a 102-residue protein sequence, read N- to C-terminus: NADH-quinone oxidoreductase subunit K (102 aa).

3 consecutive transmembrane segments (helical) span residues 6–26, 30–50, and 63–83; these read LIGM…GVLA, ILFQ…AFVA, and MLIL…ALLL.

It belongs to the complex I subunit 4L family. NDH-1 is composed of 14 different subunits. Subunits NuoA, H, J, K, L, M, N constitute the membrane sector of the complex.

Its subcellular location is the cell inner membrane. It carries out the reaction a quinone + NADH + 5 H(+)(in) = a quinol + NAD(+) + 4 H(+)(out). In terms of biological role, NDH-1 shuttles electrons from NADH, via FMN and iron-sulfur (Fe-S) centers, to quinones in the respiratory chain. The immediate electron acceptor for the enzyme in this species is believed to be ubiquinone. Couples the redox reaction to proton translocation (for every two electrons transferred, four hydrogen ions are translocated across the cytoplasmic membrane), and thus conserves the redox energy in a proton gradient. The polypeptide is NADH-quinone oxidoreductase subunit K (Rhodopseudomonas palustris (strain HaA2)).